Reading from the N-terminus, the 158-residue chain is NAD(P)H-quinone oxidoreductase subunit J, chloroplastic (158 aa).

This sequence belongs to the complex I 30 kDa subunit family. In terms of assembly, NDH is composed of at least 16 different subunits, 5 of which are encoded in the nucleus.

The protein resides in the plastid. Its subcellular location is the chloroplast thylakoid membrane. The catalysed reaction is a plastoquinone + NADH + (n+1) H(+)(in) = a plastoquinol + NAD(+) + n H(+)(out). It catalyses the reaction a plastoquinone + NADPH + (n+1) H(+)(in) = a plastoquinol + NADP(+) + n H(+)(out). NDH shuttles electrons from NAD(P)H:plastoquinone, via FMN and iron-sulfur (Fe-S) centers, to quinones in the photosynthetic chain and possibly in a chloroplast respiratory chain. The immediate electron acceptor for the enzyme in this species is believed to be plastoquinone. Couples the redox reaction to proton translocation, and thus conserves the redox energy in a proton gradient. The protein is NAD(P)H-quinone oxidoreductase subunit J, chloroplastic of Trachelium caeruleum (Blue throatwort).